A 116-amino-acid chain; its full sequence is Peptidyl-tRNA hydrolase (116 aa).

Belongs to the PTH2 family.

The protein localises to the cytoplasm. It catalyses the reaction an N-acyl-L-alpha-aminoacyl-tRNA + H2O = an N-acyl-L-amino acid + a tRNA + H(+). Functionally, the natural substrate for this enzyme may be peptidyl-tRNAs which drop off the ribosome during protein synthesis. The protein is Peptidyl-tRNA hydrolase of Methanococcus maripaludis (strain C7 / ATCC BAA-1331).